The following is an 84-amino-acid chain: Large ribosomal subunit protein bL27 (84 aa).

The segment at 1–20 is disordered; it reads MAHKKAGGSTRNGRDSNPKY.

It belongs to the bacterial ribosomal protein bL27 family.

This Francisella philomiragia subsp. philomiragia (strain ATCC 25017 / CCUG 19701 / FSC 153 / O#319-036) protein is Large ribosomal subunit protein bL27.